Consider the following 299-residue polypeptide: Secreted LysM effector ldpB (299 aa).

The signal sequence occupies residues 1–19 (MGLTSILIAQVLFLGAANS). 3 consecutive LysM domains span residues 46–91 (WVND…SYCV), 135–182 (AFYK…YVCI), and 211–258 (KYHK…YVCV). N-linked (GlcNAc...) asparagine glycosylation occurs at Asn154. Residues 266 to 283 (ATATPQPTPQPQQSSSPD) are compositionally biased toward low complexity. The tract at residues 266 to 288 (ATATPQPTPQPQQSSSPDQPMPQ) is disordered.

This sequence belongs to the secreted LysM effector family.

The protein localises to the secreted. It localises to the cell wall. It is found in the extracellular space. The protein resides in the extracellular matrix. Its function is as follows. Cell wall chitin of A.fumigatus recruits lung eosinophils during infection and ldpB might have a role in sequestration of chitin and act as triggers of host immunity to dampen host defense. This Aspergillus fumigatus (strain ATCC MYA-4609 / CBS 101355 / FGSC A1100 / Af293) (Neosartorya fumigata) protein is Secreted LysM effector ldpB.